The primary structure comprises 119 residues: Large ribosomal subunit protein uL22c (119 aa).

It belongs to the universal ribosomal protein uL22 family. Part of the 50S ribosomal subunit.

It localises to the plastid. Its subcellular location is the chloroplast. Its function is as follows. This protein binds specifically to 23S rRNA. In terms of biological role, the globular domain of the protein is located near the polypeptide exit tunnel on the outside of the subunit, while an extended beta-hairpin is found that lines the wall of the exit tunnel in the center of the 70S ribosome. This chain is Large ribosomal subunit protein uL22c (rpl22), found in Angiopteris evecta (Mule's foot fern).